A 36-amino-acid chain; its full sequence is Potassium channel toxin alpha-KTx 16.5 (36 aa).

Intrachain disulfides connect cysteine 7-cysteine 28, cysteine 13-cysteine 33, and cysteine 17-cysteine 35. Residues 26 to 33 (GKCQNKQC) form an interaction with Ca(2+)-activated K(+) channels region.

It belongs to the short scorpion toxin superfamily. Potassium channel inhibitor family. Alpha-KTx 16 subfamily. Expressed by the venom gland.

It is found in the secreted. In terms of biological role, augments responses to direct muscle stimulation probably by blocking calcium-activated potassium channels. The polypeptide is Potassium channel toxin alpha-KTx 16.5 (Leiurus hebraeus (Hebrew deathstalker scorpion)).